Here is a 454-residue protein sequence, read N- to C-terminus: Bifunctional protein GlmU (454 aa).

The interval 1 to 228 (MTLPLHVVIL…PQHVEGANDP (228 aa)) is pyrophosphorylase. UDP-N-acetyl-alpha-D-glucosamine-binding positions include 10-13 (LAAG), lysine 24, glutamine 76, 81-82 (GT), 103-105 (YGD), glycine 138, glutamate 153, asparagine 168, and asparagine 226. Aspartate 105 contacts Mg(2+). Asparagine 226 contacts Mg(2+). The tract at residues 229 to 249 (WQLAQLERAWQLRAARTLCLQ) is linker. An N-acetyltransferase region spans residues 250–454 (GVRMADPARV…IEGWKRPTKK (205 aa)). UDP-N-acetyl-alpha-D-glucosamine-binding residues include arginine 332 and lysine 350. Catalysis depends on histidine 362, which acts as the Proton acceptor. Tyrosine 365 and asparagine 376 together coordinate UDP-N-acetyl-alpha-D-glucosamine. Residues alanine 379, 385–386 (NY), serine 404, alanine 422, and arginine 439 each bind acetyl-CoA.

The protein in the N-terminal section; belongs to the N-acetylglucosamine-1-phosphate uridyltransferase family. It in the C-terminal section; belongs to the transferase hexapeptide repeat family. Homotrimer. Mg(2+) serves as cofactor.

It is found in the cytoplasm. It catalyses the reaction alpha-D-glucosamine 1-phosphate + acetyl-CoA = N-acetyl-alpha-D-glucosamine 1-phosphate + CoA + H(+). The enzyme catalyses N-acetyl-alpha-D-glucosamine 1-phosphate + UTP + H(+) = UDP-N-acetyl-alpha-D-glucosamine + diphosphate. The protein operates within nucleotide-sugar biosynthesis; UDP-N-acetyl-alpha-D-glucosamine biosynthesis; N-acetyl-alpha-D-glucosamine 1-phosphate from alpha-D-glucosamine 6-phosphate (route II): step 2/2. Its pathway is nucleotide-sugar biosynthesis; UDP-N-acetyl-alpha-D-glucosamine biosynthesis; UDP-N-acetyl-alpha-D-glucosamine from N-acetyl-alpha-D-glucosamine 1-phosphate: step 1/1. It functions in the pathway bacterial outer membrane biogenesis; LPS lipid A biosynthesis. Catalyzes the last two sequential reactions in the de novo biosynthetic pathway for UDP-N-acetylglucosamine (UDP-GlcNAc). The C-terminal domain catalyzes the transfer of acetyl group from acetyl coenzyme A to glucosamine-1-phosphate (GlcN-1-P) to produce N-acetylglucosamine-1-phosphate (GlcNAc-1-P), which is converted into UDP-GlcNAc by the transfer of uridine 5-monophosphate (from uridine 5-triphosphate), a reaction catalyzed by the N-terminal domain. The polypeptide is Bifunctional protein GlmU (Xanthomonas euvesicatoria pv. vesicatoria (strain 85-10) (Xanthomonas campestris pv. vesicatoria)).